A 624-amino-acid chain; its full sequence is MLRSSFTQSRQLLLSPARSRTAAQWLPKAGASNRLAGQRFFADAKPPVTGAPTPASPSSESPIPPESVPKPSPAAEAPPPPPPPPAPARKTGRFRKFLLYLILTSGFAYGGGIFLALKSDNFHDFFTEYVPYGEDCVLYFEERDFYRRFPNTLRNQNRAPKDEGHTVTIPSKSGLSWKVADEESGADVSQKGPHMSALDNGEKAQLKPGAAKPEEKVAAVEKAKAESAAKEQSSDDKKKVQEEPKKPAAPAVTPIEFATVSEGDEEVVQELVKTFNDIITVIGADENAHKFSGAVNKAKEELRTIGEKIIAIRNEARNAAQEEIKQAHATFDESARELIRRFEEARAHDAAQYREEFEVERERLARAYQEKVNTELQRAQEVAEQRLKNELVEQAIELNRKYLHEVKDLVEREREGRLSKLNELTANVNLLEKLTTDWKEVIDTNLKTQQLQVAVDAVRSVLERSTVPRPFVRELVAVKELAAGDPVVEAAIASINPTAYQRGIPSTSQIIERFRRVADEVRKASLLPEDAGIASHAASLVLSKVMFKKDAVAGSDDVESVLLRTEHLLEEGNLDDAAREMNTLKGWAKILSKDWLSDVRRVLEVKQALEVIETEARLQCLRVE.

The transit peptide at 1 to 41 directs the protein to the mitochondrion; that stretch reads MLRSSFTQSRQLLLSPARSRTAAQWLPKAGASNRLAGQRFF. The tract at residues 42 to 89 is disordered; it reads ADAKPPVTGAPTPASPSSESPIPPESVPKPSPAAEAPPPPPPPPAPAR. Over 42–96 the chain is Mitochondrial matrix; it reads ADAKPPVTGAPTPASPSSESPIPPESVPKPSPAAEAPPPPPPPPAPARKTGRFRK. Over residues 46 to 61 the composition is skewed to low complexity; sequence PPVTGAPTPASPSSES. The segment covering 62 to 87 has biased composition (pro residues); sequence PIPPESVPKPSPAAEAPPPPPPPPAP. Residues 97–117 traverse the membrane as a helical segment; that stretch reads FLLYLILTSGFAYGGGIFLAL. Topologically, residues 118–624 are mitochondrial intermembrane; that stretch reads KSDNFHDFFT…EARLQCLRVE (507 aa). Residues 156–250 are disordered; that stretch reads QNRAPKDEGH…QEEPKKPAAP (95 aa). Basic and acidic residues predominate over residues 212–246; the sequence is KPEEKVAAVEKAKAESAAKEQSSDDKKKVQEEPKK. Positions 295–440 form a coiled coil; the sequence is VNKAKEELRT…LEKLTTDWKE (146 aa).

It belongs to the MICOS complex subunit Mic60 family. As to quaternary structure, component of the mitochondrial contact site and cristae organizing system (MICOS) complex.

The protein localises to the mitochondrion inner membrane. In terms of biological role, component of the MICOS complex, a large protein complex of the mitochondrial inner membrane that plays crucial roles in the maintenance of crista junctions, inner membrane architecture, and formation of contact sites to the outer membrane. Plays a role in keeping cristae membranes connected to the inner boundary membrane. Also promotes protein import via the mitochondrial intermembrane space assembly (MIA) pathway. The sequence is that of MICOS complex subunit MIC60 (MIC60) from Neosartorya fischeri (strain ATCC 1020 / DSM 3700 / CBS 544.65 / FGSC A1164 / JCM 1740 / NRRL 181 / WB 181) (Aspergillus fischerianus).